The chain runs to 220 residues: MKLNKYIDHTLLKQDAKKKQIDSLLSEAREYDFASVCVNPTWVEHAKKGLEGTDVKVCTVVGFPLGATTSAVKAFETKEAIQNGADEIDMVINVGALKSGNLALVESDIRAVVEASGDKLVKVIIEACLLTDQEKIVVCQLAQKAGADFVKTSTGFSTGGATIADVRLMRETVGSDMGVKAAGGARSYADALAFVEAGATRIGTSAGVAILKGELADGDY.

Asp89 functions as the Proton donor/acceptor in the catalytic mechanism. The Schiff-base intermediate with acetaldehyde role is filled by Lys151. Catalysis depends on Lys180, which acts as the Proton donor/acceptor.

Belongs to the DeoC/FbaB aldolase family. DeoC type 1 subfamily.

It is found in the cytoplasm. It catalyses the reaction 2-deoxy-D-ribose 5-phosphate = D-glyceraldehyde 3-phosphate + acetaldehyde. It functions in the pathway carbohydrate degradation; 2-deoxy-D-ribose 1-phosphate degradation; D-glyceraldehyde 3-phosphate and acetaldehyde from 2-deoxy-alpha-D-ribose 1-phosphate: step 2/2. Its function is as follows. Catalyzes a reversible aldol reaction between acetaldehyde and D-glyceraldehyde 3-phosphate to generate 2-deoxy-D-ribose 5-phosphate. The polypeptide is Deoxyribose-phosphate aldolase (Streptococcus pneumoniae (strain Taiwan19F-14)).